The following is a 533-amino-acid chain: Lysophosphatidylcholine acyltransferase (533 aa).

Residues 1 to 79 are Cytoplasmic-facing; the sequence is MTTSTIKPTG…VLTVLLLPIR (79 aa). A helical; Signal-anchor for type II membrane protein transmembrane segment spans residues 80–100; it reads VVGCVLSLISAWMFACIGLYG. The Lumenal portion of the chain corresponds to 101–533; sequence MTLDDLKAKP…PKAVVTTAEN (433 aa). Residues 158-163 carry the HXXXXD motif motif; that stretch reads HSSYVD. EF-hand domains follow at residues 402 to 437, 439 to 474, and 475 to 510; these read LKNT…CKLK, SDLL…AGGK, and LNEQ…QKSS.

Belongs to the 1-acyl-sn-glycerol-3-phosphate acyltransferase family.

The protein resides in the endoplasmic reticulum membrane. It localises to the golgi apparatus membrane. The protein localises to the lipid droplet. It catalyses the reaction a 1-acyl-sn-glycero-3-phosphocholine + an acyl-CoA = a 1,2-diacyl-sn-glycero-3-phosphocholine + CoA. It functions in the pathway lipid metabolism; phospholipid metabolism. Its function is as follows. Acetyltransferase which mediates the conversion of 1-acyl-sn-glycero-3-phosphocholine (LPC) into phosphatidylcholine (PC). Has a calcium-independent activity. Displays a clear preference for saturated fatty acyl-CoAs, and 1-myristoyl or 1-palmitoyl LPC as acyl donors and acceptors, respectively. Involved in the regulation of lipid droplet number and size. The chain is Lysophosphatidylcholine acyltransferase from Drosophila melanogaster (Fruit fly).